Consider the following 82-residue polypeptide: Acyl carrier protein (82 aa).

A Carrier domain is found at 3-81 (SSEQEILAGL…DAVTYIAGAQ (79 aa)). The residue at position 41 (serine 41) is an O-(pantetheine 4'-phosphoryl)serine.

This sequence belongs to the acyl carrier protein (ACP) family. 4'-phosphopantetheine is transferred from CoA to a specific serine of apo-ACP by AcpS. This modification is essential for activity because fatty acids are bound in thioester linkage to the sulfhydryl of the prosthetic group.

The protein localises to the cytoplasm. It participates in lipid metabolism; fatty acid biosynthesis. Functionally, carrier of the growing fatty acid chain in fatty acid biosynthesis. The protein is Acyl carrier protein of Beutenbergia cavernae (strain ATCC BAA-8 / DSM 12333 / CCUG 43141 / JCM 11478 / NBRC 16432 / NCIMB 13614 / HKI 0122).